Consider the following 163-residue polypeptide: E1B protein, small T-antigen (163 aa).

Belongs to the adenoviridae E1B 19 kDa protein family.

The protein localises to the host cell membrane. Its subcellular location is the host nucleus envelope. The protein resides in the host nucleus lamina. Its function is as follows. Putative adenovirus Bcl-2 homolog that inhibits apoptosis induced by TNF or FAS pathways, as well as p53-mediated apoptosis. Without E1B 19K function, virus production is compromised because of premature death of host cell. Interacts with Bax protein in cell lysates. The protein is E1B protein, small T-antigen of Human adenovirus A serotype 12 (HAdV-12).